The sequence spans 224 residues: Oocyte zinc finger protein XlCOF6.1 (224 aa).

C2H2-type zinc fingers lie at residues 6–28, 34–56, 62–84, 90–112, 118–140, 146–168, 174–196, and 202–224; these read FSCS…CRSH, FHCT…QRYH, FTCF…IRMH, FSCS…QKIH, FSCS…YRTH, FPCP…RRTH, FACS…RLGH, and FSCS…LKSH.

This sequence belongs to the krueppel C2H2-type zinc-finger protein family.

The protein resides in the nucleus. Its function is as follows. May be involved in transcriptional regulation. The polypeptide is Oocyte zinc finger protein XlCOF6.1 (Xenopus laevis (African clawed frog)).